Here is an 839-residue protein sequence, read N- to C-terminus: ABC transporter A family member 7 (839 aa).

The next 7 helical transmembrane spans lie at 30–50, 238–258, 286–306, 321–341, 352–372, 378–398, and 419–439; these read GVQI…KLWI, IASL…LPLF, IMTF…ISLI, FALF…AFFL, SIFG…LSLF, VFYY…LCGL, and ILFW…YLDK. The 232-residue stretch at 525 to 756 folds into the ABC transporter domain; it reads LIVQGLRKQF…FGDGYSVRID (232 aa). 559–566 is an ATP binding site; sequence GPNGAGKT.

It belongs to the ABC transporter superfamily. ABCA family.

Its subcellular location is the membrane. This Dictyostelium discoideum (Social amoeba) protein is ABC transporter A family member 7 (abcA7).